Reading from the N-terminus, the 400-residue chain is Carnosine N-methyltransferase (400 aa).

The segment at Met-1–Glu-49 is disordered. S-adenosyl-L-methionine contacts are provided by Gln-155, Arg-158, Gly-199, Glu-220, Asp-286, Phe-287, and Cys-303. Asp-307 is a binding site for carnosine. Tyr-315 provides a ligand contact to S-adenosyl-L-methionine. Positions 338 and 389 each coordinate carnosine.

The protein belongs to the carnosine N-methyltransferase family. As to quaternary structure, homodimer. Each monomer accommodates one molecule of carnosine in its active pocket, precisely anchoring the histidine imidazole ring such that only N1 is exposed and deprotonated for methylation. Expressed at higher level in skeletal muscle compared to other tissues.

It is found in the cytoplasm. The protein localises to the cytosol. Its subcellular location is the nucleus. It catalyses the reaction carnosine + S-adenosyl-L-methionine = anserine + S-adenosyl-L-homocysteine + H(+). Its function is as follows. N-methyltransferase that catalyzes the formation of anserine (beta-alanyl-N(Pi)-methyl-L-histidine) from carnosine. Anserine, a methylated derivative of carnosine (beta-alanyl-L-histidine), is an abundant constituent of vertebrate skeletal muscles. Also methylates other L-histidine-containing di- and tripeptides such as Gly-Gly-His, Gly-His and homocarnosine (GABA-His). This is Carnosine N-methyltransferase from Rattus norvegicus (Rat).